Here is a 148-residue protein sequence, read N- to C-terminus: Flavodoxin (148 aa).

In terms of domain architecture, Flavodoxin-like spans 4–145 (VLILFGSSTG…AVSAFAEDVL (142 aa)).

Belongs to the flavodoxin family. FMN serves as cofactor.

Functionally, low-potential electron donor to a number of redox enzymes. This chain is Flavodoxin, found in Desulfovibrio desulfuricans (strain ATCC 27774 / DSM 6949 / MB).